A 372-amino-acid polypeptide reads, in one-letter code: Testis-specific serine/threonine-protein kinase 5 (372 aa).

One can recognise a Protein kinase domain in the interval 27-302 (LLSSKKIGSG…LQQVAAHCWM (276 aa)). Residues 33-41 (IGSGAFSKV) and K72 contribute to the ATP site. The active-site Proton acceptor is D173. Residues 314-372 (GAPREQDHSWSTVAPDNTEPDRDTRHARSKGSSSSSGRTSPRRPSLAQLCNTWKPAPEQ) are disordered. Residues 343-358 (KGSSSSSGRTSPRRPS) show a composition bias toward low complexity.

It belongs to the protein kinase superfamily. CAMK Ser/Thr protein kinase family. Mg(2+) serves as cofactor. In terms of processing, autophosphorylated.

It carries out the reaction L-seryl-[protein] + ATP = O-phospho-L-seryl-[protein] + ADP + H(+). The catalysed reaction is L-threonyl-[protein] + ATP = O-phospho-L-threonyl-[protein] + ADP + H(+). Activated by phosphorylation on Thr-207, potentially by autophosphorylation. Functionally, may be involved in a signaling pathway during male germ cell development or mature sperm function. This chain is Testis-specific serine/threonine-protein kinase 5, found in Mus musculus (Mouse).